Here is a 406-residue protein sequence, read N- to C-terminus: [Pyruvate dehydrogenase (acetyl-transferring)] kinase isozyme 3, mitochondrial (406 aa).

A Histidine kinase domain is found at 131–362; the sequence is IEYKEKFGFD…DAVIYLKALS (232 aa). Residue 247–254 coordinates ATP; sequence ELFKNSMR. K278 is modified (N6-succinyllysine). ATP is bound by residues D287, 306 to 307, and 323 to 328; these read ST and GFGYGL. The disordered stretch occupies residues 383 to 406; sequence TPEADDWSNPSSEPRDASKYKAKQ. The segment covering 395 to 406 has biased composition (basic and acidic residues); it reads EPRDASKYKAKQ.

The protein belongs to the PDK/BCKDK protein kinase family. Homodimer. Interacts with the pyruvate dehydrogenase complex subunit DLAT, and is part of the multimeric pyruvate dehydrogenase complex that contains multiple copies of pyruvate dehydrogenase (E1), dihydrolipoamide acetyltransferase (DLAT, E2) and lipoamide dehydrogenase (DLD, E3). As to expression, expressed in heart, skeletal muscle, spinal cord, as well as fetal and adult brain.

It is found in the mitochondrion matrix. It carries out the reaction L-seryl-[pyruvate dehydrogenase E1 alpha subunit] + ATP = O-phospho-L-seryl-[pyruvate dehydrogenase E1 alpha subunit] + ADP + H(+). Its activity is regulated as follows. Activated by interaction with DLAT. Inhibited by AZD7545, dichloroacetate and radicicol. Its function is as follows. Inhibits pyruvate dehydrogenase activity by phosphorylation of the E1 subunit PDHA1, and thereby regulates glucose metabolism and aerobic respiration. Can also phosphorylate PDHA2. Decreases glucose utilization and increases fat metabolism in response to prolonged fasting, and as adaptation to a high-fat diet. Plays a role in glucose homeostasis and in maintaining normal blood glucose levels in function of nutrient levels and under starvation. Plays a role in the generation of reactive oxygen species. The protein is [Pyruvate dehydrogenase (acetyl-transferring)] kinase isozyme 3, mitochondrial (PDK3) of Homo sapiens (Human).